The primary structure comprises 173 residues: Transcription factor E (173 aa).

Positions 6 to 89 (PLEELLEFVR…YWYVDRETLN (84 aa)) constitute an HTH TFE/IIEalpha-type domain.

Belongs to the TFE family. In terms of assembly, monomer. Interaction with RNA polymerase subunits RpoF and RpoE is necessary for Tfe stimulatory transcription activity. Able to interact with Tbp and RNA polymerase in the absence of DNA promoter. Interacts both with the preinitiation and elongation complexes.

In terms of biological role, transcription factor that plays a role in the activation of archaeal genes transcribed by RNA polymerase. Facilitates transcription initiation by enhancing TATA-box recognition by TATA-box-binding protein (Tbp), and transcription factor B (Tfb) and RNA polymerase recruitment. Not absolutely required for transcription in vitro, but particularly important in cases where Tbp or Tfb function is not optimal. It dynamically alters the nucleic acid-binding properties of RNA polymerases by stabilizing the initiation complex and destabilizing elongation complexes. Seems to translocate with the RNA polymerase following initiation and acts by binding to the non template strand of the transcription bubble in elongation complexes. This chain is Transcription factor E, found in Ignicoccus hospitalis (strain KIN4/I / DSM 18386 / JCM 14125).